The chain runs to 160 residues: Dihydrofolate reductase (160 aa).

Residues 1-160 (MVKAIWAMDQ…KVAYYHKIAR (160 aa)) enclose the DHFR domain. 5-7 (IWA) contacts substrate. NADP(+) contacts are provided by residues 6 to 7 (WA) and 14 to 19 (IGNGNS). Substrate is bound by residues Glu-27 and Arg-32. 43–46 (GSAT) lines the NADP(+) pocket. Arg-57 contributes to the substrate binding site. Residues 62-65 (LTRN) and 101-106 (CGGAQV) contribute to the NADP(+) site. Position 120 (Ser-120) interacts with substrate.

The protein belongs to the dihydrofolate reductase family.

It carries out the reaction (6S)-5,6,7,8-tetrahydrofolate + NADP(+) = 7,8-dihydrofolate + NADPH + H(+). The protein operates within cofactor biosynthesis; tetrahydrofolate biosynthesis; 5,6,7,8-tetrahydrofolate from 7,8-dihydrofolate: step 1/1. Functionally, key enzyme in folate metabolism. Catalyzes an essential reaction for de novo glycine and purine synthesis, and for DNA precursor synthesis. The polypeptide is Dihydrofolate reductase (folA) (Mycoplasma pneumoniae (strain ATCC 29342 / M129 / Subtype 1) (Mycoplasmoides pneumoniae)).